Consider the following 600-residue polypeptide: NADH-quinone oxidoreductase subunit C/D (600 aa).

The NADH dehydrogenase I subunit C stretch occupies residues 1-190 (MVNNMTDLTA…DPFELTKAKQ (190 aa)). Positions 214–600 (DFMFLNLGPN…IDFVMSDVDR (387 aa)) are NADH dehydrogenase I subunit D.

In the N-terminal section; belongs to the complex I 30 kDa subunit family. It in the C-terminal section; belongs to the complex I 49 kDa subunit family. As to quaternary structure, NDH-1 is composed of 13 different subunits. Subunits NuoB, CD, E, F, and G constitute the peripheral sector of the complex.

The protein localises to the cell inner membrane. The enzyme catalyses a quinone + NADH + 5 H(+)(in) = a quinol + NAD(+) + 4 H(+)(out). Functionally, NDH-1 shuttles electrons from NADH, via FMN and iron-sulfur (Fe-S) centers, to quinones in the respiratory chain. The immediate electron acceptor for the enzyme in this species is believed to be ubiquinone. Couples the redox reaction to proton translocation (for every two electrons transferred, four hydrogen ions are translocated across the cytoplasmic membrane), and thus conserves the redox energy in a proton gradient. The chain is NADH-quinone oxidoreductase subunit C/D from Salmonella paratyphi A (strain ATCC 9150 / SARB42).